The chain runs to 446 residues: Histidinol dehydrogenase homolog (446 aa).

Histidine 266 serves as a coordination point for Zn(2+). Active-site proton acceptor residues include glutamate 334 and histidine 335. Histidine 427 is a Zn(2+) binding site.

It belongs to the histidinol dehydrogenase family. It depends on Zn(2+) as a cofactor.

This chain is Histidinol dehydrogenase homolog, found in Colwellia psychrerythraea (strain 34H / ATCC BAA-681) (Vibrio psychroerythus).